Reading from the N-terminus, the 340-residue chain is Anthranilate phosphoribosyltransferase (340 aa).

5-phospho-alpha-D-ribose 1-diphosphate contacts are provided by residues Gly-80, 83-84 (GD), Thr-88, 90-93 (NIST), 108-116 (KHGNRAMSS), and Ser-120. Gly-80 serves as a coordination point for anthranilate. Ser-92 provides a ligand contact to Mg(2+). Asn-111 lines the anthranilate pocket. Arg-166 serves as a coordination point for anthranilate. Residues Asp-225 and Glu-226 each contribute to the Mg(2+) site.

It belongs to the anthranilate phosphoribosyltransferase family. As to quaternary structure, homodimer. The cofactor is Mg(2+).

The enzyme catalyses N-(5-phospho-beta-D-ribosyl)anthranilate + diphosphate = 5-phospho-alpha-D-ribose 1-diphosphate + anthranilate. It functions in the pathway amino-acid biosynthesis; L-tryptophan biosynthesis; L-tryptophan from chorismate: step 2/5. Functionally, catalyzes the transfer of the phosphoribosyl group of 5-phosphorylribose-1-pyrophosphate (PRPP) to anthranilate to yield N-(5'-phosphoribosyl)-anthranilate (PRA). The polypeptide is Anthranilate phosphoribosyltransferase (Roseiflexus castenholzii (strain DSM 13941 / HLO8)).